The primary structure comprises 205 residues: IQ domain-containing protein F1 (205 aa).

2 stretches are compositionally biased toward basic and acidic residues: residues 1-24 (MEEK…KEMP) and 51-68 (ANEK…LSDK). The interval 1–68 (MEEKQPQKTK…PENQKKLSDK (68 aa)) is disordered. IQ domains lie at 68 to 97 (KDTV…SACI) and 124 to 153 (KEWA…AVRI).

As to quaternary structure, interacts with calmodulin.

It is found in the cytoplasmic vesicle. It localises to the secretory vesicle. The protein localises to the acrosome. In terms of biological role, involved in sperm capacitation and acrosome reaction. The sequence is that of IQ domain-containing protein F1 from Homo sapiens (Human).